Here is a 907-residue protein sequence, read N- to C-terminus: Isoleucine--tRNA ligase (907 aa).

The 'HIGH' region motif lies at proline 57 to serine 67. An L-isoleucyl-5'-AMP-binding site is contributed by glutamate 549. The 'KMSKS' region signature appears at lysine 590–serine 594. Lysine 593 is a binding site for ATP. The Zn(2+) site is built by cysteine 867, cysteine 870, cysteine 889, and cysteine 892.

Belongs to the class-I aminoacyl-tRNA synthetase family. IleS type 1 subfamily. In terms of assembly, monomer. Zn(2+) serves as cofactor.

It localises to the cytoplasm. It carries out the reaction tRNA(Ile) + L-isoleucine + ATP = L-isoleucyl-tRNA(Ile) + AMP + diphosphate. Its function is as follows. Catalyzes the attachment of isoleucine to tRNA(Ile). As IleRS can inadvertently accommodate and process structurally similar amino acids such as valine, to avoid such errors it has two additional distinct tRNA(Ile)-dependent editing activities. One activity is designated as 'pretransfer' editing and involves the hydrolysis of activated Val-AMP. The other activity is designated 'posttransfer' editing and involves deacylation of mischarged Val-tRNA(Ile). The polypeptide is Isoleucine--tRNA ligase (Methylacidiphilum infernorum (isolate V4) (Methylokorus infernorum (strain V4))).